The chain runs to 555 residues: MMDNKDLEAEIHPLKNEDKKSQENPGNLPRNEDNLKSKPVPSRLSRCRTVAFFLSLFTCLFVVFVLSFIIPCPDRPSSQGTWKLDYNNAVMYDFLALGDINKDKVQDVLFLYKNTNSSNNLTRSCADEGFSTPCAFVVAVSGANGSVLWERPVAQDVALVKCAMPQTLDSDEVSSACIVVGRAGSFVAVSFFTGETLWSHPSSFSGNVSILSPLLQVPDIDGDGDGTPDLLILAQEGQEVSGALYSGSTGYQIGHRGSLGVDGDGVALLHVTRTGAQYILLPCASALCGFSVKSLYERITGRDGHFKEDPYWENMLNHSVHRRLLHRLGAVRYLMNIPGKAGQDLLLVTSEACVLLDGQDLEPRWTLGEVQVLRKPILGHYKPDTLAVVIENGTSIDRQILLLDLSTGSILWSQPLPSLPGGPPSTSLMTADHRSAFFFWGLHDLVSTNEMDPPDVQHSLYMFHPTLPGILLELANVSANIVAFDAVLLEPSRHAAYVLLTGPASSDVPGLVSVTKHKVQDLVPGSRVIHLGEGSSDSDQAIRDRFSRLRYRSEM.

Over residues Met1 to Gln22 the composition is skewed to basic and acidic residues. The interval Met1–Val40 is disordered. Topologically, residues Met1–Thr49 are cytoplasmic. Position 21 is a phosphoserine (Ser21). The helical; Signal-anchor for type II membrane protein transmembrane segment at Val50–Ile70 threads the bilayer. Residues Pro71 to Met555 lie on the Extracellular side of the membrane. N-linked (GlcNAc...) asparagine glycosylation is found at Asn116, Asn120, Asn317, Asn392, and Asn476.

The protein belongs to the FAM234 family.

It is found in the membrane. The chain is Protein FAM234A from Mus musculus (Mouse).